A 75-amino-acid chain; its full sequence is Protein B7 (75 aa).

This Human herpesvirus 6B (strain Z29) (HHV-6 variant B) protein is Protein B7 (B7).